A 266-amino-acid chain; its full sequence is tRNA pseudouridine synthase A (266 aa).

D55 (nucleophile) is an active-site residue. Residue Y110 coordinates substrate.

Belongs to the tRNA pseudouridine synthase TruA family.

It carries out the reaction uridine(38/39/40) in tRNA = pseudouridine(38/39/40) in tRNA. Its function is as follows. Formation of pseudouridine at positions 38, 39 and 40 in the anticodon stem and loop of transfer RNAs. This is tRNA pseudouridine synthase A from Thermococcus sibiricus (strain DSM 12597 / MM 739).